The following is a 318-amino-acid chain: Ribose-phosphate pyrophosphokinase 2 (318 aa).

96–101 contacts ATP; that stretch reads RQDKKD. Mg(2+)-binding residues include Asp-128, His-130, Asp-139, and Asp-143. His-130 is a binding site for ATP. The binding of phosphoribosylpyrophosphate stretch occupies residues 212–227; that stretch reads KDRVAILVDDMADTCG.

It belongs to the ribose-phosphate pyrophosphokinase family. Homodimer. The active form is probably a hexamer composed of 3 homodimers. Mg(2+) serves as cofactor.

The catalysed reaction is D-ribose 5-phosphate + ATP = 5-phospho-alpha-D-ribose 1-diphosphate + AMP + H(+). It participates in metabolic intermediate biosynthesis; 5-phospho-alpha-D-ribose 1-diphosphate biosynthesis; 5-phospho-alpha-D-ribose 1-diphosphate from D-ribose 5-phosphate (route I): step 1/1. Activated by magnesium and inorganic phosphate. Competitively or non-competitively inhibited by ADP, 2,3-bisphosphoglyceride or GDP. Its function is as follows. Catalyzes the synthesis of phosphoribosylpyrophosphate (PRPP) that is essential for nucleotide synthesis. The protein is Ribose-phosphate pyrophosphokinase 2 (PRPS2) of Homo sapiens (Human).